The primary structure comprises 466 residues: Alpha-1A adrenergic receptor (466 aa).

Residues 1-25 (MVFLSGNASDSSNCTHPPAPVNISK) are Extracellular-facing. N-linked (GlcNAc...) asparagine glycosylation is found at Asn-7, Asn-13, and Asn-22. A helical membrane pass occupies residues 26 to 51 (AILLGVILGGLILFGVLGNILVILSV). Over 52 to 63 (ACHRHLHSVTHY) the chain is Cytoplasmic. The helical transmembrane segment at 64–89 (YIVNLAVADLLLTSTVLPFSAIFEIL) threads the bilayer. Topologically, residues 90–99 (GYWAFGRVFC) are extracellular. Residues 100–122 (NIWAAVDVLCCTASIISLCVISI) traverse the membrane as a helical segment. Over 123-143 (DRYIGVSYPLRYPTIVTQRRG) the chain is Cytoplasmic. The helical transmembrane segment at 144–168 (LRALLCVWAFSLVISVGPLFGWRQP) threads the bilayer. The Extracellular segment spans residues 169 to 181 (APDDETICQINEE). A helical transmembrane segment spans residues 182–205 (PGYVLFSALGSFYVPLTIILAMYC). At 206-272 (RVYVVAKRES…KFSREKKAAK (67 aa)) the chain is on the cytoplasmic side. A helical transmembrane segment spans residues 273–297 (TLGIVVGCFVLCWLPFFLVMPIGSF). Residues 298–304 (FPDFKPP) lie on the Extracellular side of the membrane. A helical transmembrane segment spans residues 305–329 (ETVFKIVFWLGYLNSCINPIIYPCS). At 330-466 (SQEFKKAFQN…ISLSENGEEV (137 aa)) the chain is on the cytoplasmic side. The Nuclear localization signal motif lies at 334–349 (KKAFQNVLKIQCLRRK). Cys-345 is lipidated: S-palmitoyl cysteine.

The protein belongs to the G-protein coupled receptor 1 family. Adrenergic receptor subfamily. ADRA1A sub-subfamily. As to quaternary structure, homo- and heterooligomer. Heterooligomerizes with ADRA1B homooligomers in cardiac myocytes. Interacts with CAVIN4. Abundant in liver, vas deferens, brain, and aorta, but not in heart.

The protein resides in the nucleus membrane. It localises to the cell membrane. It is found in the cytoplasm. Its subcellular location is the membrane. The protein localises to the caveola. This alpha-adrenergic receptor mediates its action by association with G proteins that activate a phosphatidylinositol-calcium second messenger system. Its effect is mediated by G(q) and G(11) proteins. Nuclear ADRA1A-ADRA1B heterooligomers regulate phenylephrine (PE)-stimulated ERK signaling in cardiac myocytes. The chain is Alpha-1A adrenergic receptor (ADRA1A) from Oryctolagus cuniculus (Rabbit).